Here is a 499-residue protein sequence, read N- to C-terminus: Low-affinity inorganic phosphate transporter PitB (499 aa).

The next 10 membrane-spanning stretches (helical) occupy residues 5 to 25 (FVGL…FVLF), 52 to 72 (LAVV…GLSV), 94 to 114 (LAMV…TWFF), 124 to 144 (LIGA…SSVM), 155 to 175 (IFSS…GLIF), 207 to 227 (PFWT…SHGA), 233 to 253 (GIGL…VVNM), 382 to 402 (APVW…MIGW), 430 to 450 (AAVS…THVL), and 473 to 493 (ILMA…GLYW).

It belongs to the inorganic phosphate transporter (PiT) (TC 2.A.20) family. Pit subfamily.

It localises to the cell inner membrane. It carries out the reaction phosphate(in) + H(+)(in) = phosphate(out) + H(+)(out). Functionally, low-affinity inorganic phosphate transporter. The chain is Low-affinity inorganic phosphate transporter PitB from Escherichia coli (strain K12).